The primary structure comprises 386 residues: MNRDQSDLHIDELLADPFGGNIEIPGSEAVKAEKEQVRLVDVLPEENKEKAIQLAGQIDHKNMQSIVLYGSQAQSKLLNFSHDMINHVQKKDVGEIGEILGELMKKLEQVNPDDLQSKKKGFLARMFGRVSSSLQEVLSKYQKTSVQIDRISLKLEHSKNALISDNKLLEQLYEKNKEYFAALNVYIAAGELKLEELKTKTIPELKQQAESSDHNQMAVQEVNDLIQFADRLDKRVHDLLLSRQITIQSAPQIRLIQNTNQALAEKIQSSIVTAIPLWKNQVAIALTLLRQRNAVDAQQKVSDTTNELLLKNAELLKTNTIETARANERGLVDIDTLKKVQESLISTLEETLTIQEEGRIKRRQAEEELMMMEGDLKQKLITIKER.

Belongs to the TelA family.

This is an uncharacterized protein from Bacillus subtilis (strain 168).